We begin with the raw amino-acid sequence, 108 residues long: UPF0060 membrane protein CKO_01576 (108 aa).

A run of 4 helical transmembrane segments spans residues 6-26 (LLFF…WLWL), 29-49 (GATA…VWLL), 61-81 (AAYG…VDGV), and 85-105 (LYDW…VAGW).

Belongs to the UPF0060 family.

The protein localises to the cell inner membrane. This is UPF0060 membrane protein CKO_01576 from Citrobacter koseri (strain ATCC BAA-895 / CDC 4225-83 / SGSC4696).